The sequence spans 164 residues: Protein-export protein SecB (164 aa).

Belongs to the SecB family. In terms of assembly, homotetramer, a dimer of dimers. One homotetramer interacts with 1 SecA dimer.

It is found in the cytoplasm. In terms of biological role, one of the proteins required for the normal export of preproteins out of the cell cytoplasm. It is a molecular chaperone that binds to a subset of precursor proteins, maintaining them in a translocation-competent state. It also specifically binds to its receptor SecA. The polypeptide is Protein-export protein SecB (Burkholderia orbicola (strain MC0-3)).